Reading from the N-terminus, the 366-residue chain is MWPLSHRHLCLAFLLVCVLSAISFFLHIHQDSFPHGLGLSVLCPDRRLVTHPVAIFCLPGTPMSPNTSSPCPQHAASLSGTWTIYPDGRFGNQMGQYATLLALAQLNGRQAFILPAMHAALAPVFRITLPVLAPEVDSRTPWRELRLHDWMSEEYADLGDPFLKLSGFPCSWTFFHHLREQIRSEFTLHDHLREEAQSVLRRLHLGRSGDRPRTFVGVHVRRGDYLQVMPQRWRGVVGNSAYLREAMDWFRARHEAPVFVVTSNGMEWCRENIDASKGDVVFAGDGQEASPWKDFALLTQCNHTIMTIGTFGFWAAYLAGGDTVYLANFTLPDSEFLKIFKPEAAFLPEWVGINADLSPLWTLAEP.

Over 1–8 the chain is Cytoplasmic; sequence MWPLSHRH. A helical; Signal-anchor for type II membrane protein membrane pass occupies residues 9–25; it reads LCLAFLLVCVLSAISFF. Topologically, residues 26-366 are lumenal; the sequence is LHIHQDSFPH…LSPLWTLAEP (341 aa). Asparagine 66, asparagine 302, and asparagine 328 each carry an N-linked (GlcNAc...) asparagine glycan.

Belongs to the glycosyltransferase 11 family.

It is found in the golgi apparatus. The protein localises to the golgi stack membrane. The catalysed reaction is a beta-D-galactosyl-(1-&gt;4)-N-acetyl-beta-D-glucosaminyl derivative + GDP-beta-L-fucose = an alpha-L-Fuc-(1-&gt;2)-beta-D-Gal-(1-&gt;4)-beta-D-GlcNAc derivative + GDP + H(+). It carries out the reaction a ganglioside GA1 + GDP-beta-L-fucose = a ganglioside Fuc-GA1 + GDP + H(+). The enzyme catalyses a beta-D-Gal-(1-&gt;3)-beta-D-GlcNAc-(1-&gt;3)-beta-D-Gal-(1-&gt;4)-beta-D-Glc-(1&lt;-&gt;1')-Cer(d18:1(4E)) + GDP-beta-L-fucose = alpha-L-fucosyl-(1-&gt;2)- beta-D-galactosyl-(1-&gt;3)-N-acetyl-beta-D-glucosaminyl-(1-&gt;3)-beta-D-galactosyl-(1-&gt;4)-beta-D-glucosyl-(1&lt;-&gt;1')-N-acylsphing-4-enine + GDP + H(+). It catalyses the reaction a neolactoside nLc4Cer(d18:1(4E)) + GDP-beta-L-fucose = a neolactoside IV(2)-alpha-Fuc-nLc4Cer(d18:1(4E)) + GDP + H(+). The catalysed reaction is a ganglioside GM1 + GDP-beta-L-fucose = a ganglioside Fuc-GM1 + GDP + H(+). It carries out the reaction beta-D-galactosyl-(1-&gt;3)-N-acetyl-D-galactosamine + GDP-beta-L-fucose = alpha-L-fucosyl-(1-&gt;2)-beta-D-galactosyl-(1-&gt;3)-N-acetyl-D-galactosamine + GDP + H(+). The protein operates within protein modification; protein glycosylation. Functionally, catalyzes the transfer of L-fucose, from a guanosine diphosphate-beta-L-fucose, to the terminal galactose residue of glycoconjugates through an alpha(1,2) linkage leading to H antigen synthesis that is an intermediate substrate in the synthesis of ABO blood group antigens. H antigen is essential for maturation of the glomerular layer of the main olfactory bulb, in cell migration and early cell-cell contacts during tumor associated angiogenesis. Preferentially fucosylates soluble lactose and to a lesser extent fucosylates glycolipids gangliosides GA1 and GM1a. This is Galactoside alpha-(1,2)-fucosyltransferase 1 from Lagothrix lagotricha (Brown woolly monkey).